The primary structure comprises 480 residues: uncharacterized protein (480 aa).

Residues 7–28 (HVISIFETFGAYFINIFYNFLY) traverse the membrane as a helical segment. 2 N-linked (GlcNAc...) asparagine; by host glycosylation sites follow: Asn-73 and Asn-195. Residues 195–235 (NRSLLYQIEELTSEKKSLLAELSTLRKKYEKRQSEYRRLVQ) adopt a coiled-coil conformation. The disordered stretch occupies residues 297–332 (ELTSKSPSNYPVPQSRTIVSKPSDNYPVPQSRSSKI). The segment covering 301–329 (KSPSNYPVPQSRTIVSKPSDNYPVPQSRS) has biased composition (polar residues). Asn-455 is a glycosylation site (N-linked (GlcNAc...) asparagine; by host).

Belongs to the asfivirus B475L family.

It localises to the host membrane. This is an uncharacterized protein from African swine fever virus (isolate Pig/Kenya/KEN-50/1950) (ASFV).